The sequence spans 347 residues: Phenylalanine--tRNA ligase alpha subunit (347 aa).

E265 contacts Mg(2+).

It belongs to the class-II aminoacyl-tRNA synthetase family. Phe-tRNA synthetase alpha subunit type 1 subfamily. Tetramer of two alpha and two beta subunits. Mg(2+) serves as cofactor.

The protein localises to the cytoplasm. The catalysed reaction is tRNA(Phe) + L-phenylalanine + ATP = L-phenylalanyl-tRNA(Phe) + AMP + diphosphate + H(+). This is Phenylalanine--tRNA ligase alpha subunit from Wolbachia pipientis wMel.